Reading from the N-terminus, the 163-residue chain is Phosphopantetheine adenylyltransferase (163 aa).

Threonine 11 is a substrate binding site. ATP is bound by residues 11 to 12 and histidine 19; that span reads TF. Residues lysine 43, leucine 75, and arginine 89 each contribute to the substrate site. Residues 90–92, glutamate 100, and 125–131 each bind ATP; these read GLR and YMFISAT.

Belongs to the bacterial CoaD family. Homohexamer. Mg(2+) is required as a cofactor.

It localises to the cytoplasm. The enzyme catalyses (R)-4'-phosphopantetheine + ATP + H(+) = 3'-dephospho-CoA + diphosphate. The protein operates within cofactor biosynthesis; coenzyme A biosynthesis; CoA from (R)-pantothenate: step 4/5. Its function is as follows. Reversibly transfers an adenylyl group from ATP to 4'-phosphopantetheine, yielding dephospho-CoA (dPCoA) and pyrophosphate. In Azoarcus sp. (strain BH72), this protein is Phosphopantetheine adenylyltransferase.